The sequence spans 233 residues: Biosynthetic peptidoglycan transglycosylase (233 aa).

A helical membrane pass occupies residues Leu-8–Ile-28.

It belongs to the glycosyltransferase 51 family.

It is found in the cell inner membrane. The enzyme catalyses [GlcNAc-(1-&gt;4)-Mur2Ac(oyl-L-Ala-gamma-D-Glu-L-Lys-D-Ala-D-Ala)](n)-di-trans,octa-cis-undecaprenyl diphosphate + beta-D-GlcNAc-(1-&gt;4)-Mur2Ac(oyl-L-Ala-gamma-D-Glu-L-Lys-D-Ala-D-Ala)-di-trans,octa-cis-undecaprenyl diphosphate = [GlcNAc-(1-&gt;4)-Mur2Ac(oyl-L-Ala-gamma-D-Glu-L-Lys-D-Ala-D-Ala)](n+1)-di-trans,octa-cis-undecaprenyl diphosphate + di-trans,octa-cis-undecaprenyl diphosphate + H(+). The protein operates within cell wall biogenesis; peptidoglycan biosynthesis. Its function is as follows. Peptidoglycan polymerase that catalyzes glycan chain elongation from lipid-linked precursors. This is Biosynthetic peptidoglycan transglycosylase from Neisseria gonorrhoeae (strain ATCC 700825 / FA 1090).